The primary structure comprises 479 residues: FAD-dependent monooxygenase ausM (479 aa).

3 residues coordinate FAD: glutamate 40, glycine 54, and arginine 113. Tyrosine 224 is an active-site residue. N-linked (GlcNAc...) asparagine glycosylation occurs at asparagine 289. FAD is bound by residues aspartate 316 and alanine 329. A helical transmembrane segment spans residues 449-469 (TLPWLVISLPVLASMLCYLVY).

Belongs to the paxM FAD-dependent monooxygenase family. FAD serves as cofactor.

It localises to the membrane. Its pathway is secondary metabolite biosynthesis; terpenoid biosynthesis. Its function is as follows. FAD-dependent monooxygenase; part of the gene cluster B that mediates the biosynthesis of austinol and dehydroaustinol, two fungal meroterpenoids. The first step of the pathway is the synthesis of 3,5-dimethylorsellinic acid by the polyketide synthase ausA. 3,5-dimethylorsellinic acid is then prenylated by the polyprenyl transferase ausN. Further epoxidation by the FAD-dependent monooxygenase ausM and cyclization by the probable terpene cyclase ausL lead to the formation of protoaustinoid A. Protoaustinoid A is then oxidized to spiro-lactone preaustinoid A3 by the combined action of the FAD-binding monooxygenases ausB and ausC, and the dioxygenase ausE. Acid-catalyzed keto-rearrangement and ring contraction of the tetraketide portion of preaustinoid A3 by ausJ lead to the formation of preaustinoid A4. The aldo-keto reductase ausK, with the help of ausH, is involved in the next step by transforming preaustinoid A4 into isoaustinone which is in turn hydroxylated by the P450 monooxygenase ausI to form austinolide. Finally, the cytochrome P450 monooxygenase ausG modifies austinolide to austinol. Austinol can be further modified to dehydroaustinol which forms a diffusible complex with diorcinol that initiates conidiation. Due to genetic rearrangements of the clusters and the subsequent loss of some enzymes, the end products of the Emericella nidulans austinoid biosynthesis clusters are austinol and dehydroaustinol, even if additional enzymes, such as the O-acetyltransferase ausQ and the cytochrome P450 monooxygenase ausR are still functional. The sequence is that of FAD-dependent monooxygenase ausM from Emericella nidulans (strain FGSC A4 / ATCC 38163 / CBS 112.46 / NRRL 194 / M139) (Aspergillus nidulans).